The chain runs to 238 residues: Survival of motor neuron-related-splicing factor 30 (238 aa).

One can recognise a Tudor domain in the interval 72–132 (SWKVGDKCMA…KPVEEGRKAK (61 aa)). The Nuclear localization signal signature appears at 142-160 (KKEMIAQQREYKKKKALKK). The residue at position 201 (S201) is a Phosphoserine. K219 carries the N6-acetyllysine modification.

Belongs to the SMN family. Associates with spliceosomes. Associates with U4/U5/U6 tri-snRNP and with U2 snRNP.

Its subcellular location is the nucleus speckle. It localises to the nucleus. The protein resides in the cajal body. Functionally, involved in spliceosome assembly. This chain is Survival of motor neuron-related-splicing factor 30 (SMNDC1), found in Pongo abelii (Sumatran orangutan).